Consider the following 372-residue polypeptide: Dof zinc finger protein DOF5.6 (372 aa).

A Dof-type zinc finger spans residues 73 to 127 (QKCPRCESTHTKFCYYNNYSLSQPRYFCKTCRRYWTKGGTLRNIPVGGGCRKNKK). Positions 75, 78, 100, and 103 each coordinate Zn(2+). The segment at 117–146 (PVGGGCRKNKKPSSSNSSSSTSSGKKPSNI) is disordered. Positions 128 to 145 (PSSSNSSSSTSSGKKPSN) are enriched in low complexity.

In terms of tissue distribution, the PEAR proteins (e.g. DOF2.4, DOF5.1, DOF3.2, DOF1.1, DOF5.6 and DOF5.3) form a short-range concentration gradient that peaks at protophloem sieve elements (PSE). Preferentially expressed in the vasculature of all organs, including seedlings, roots, stems, buds, leaves, flowers and siliques, and particularly in the cambium, phloem and interfascicular parenchyma cells of inflorescence stems.

It localises to the nucleus. In terms of biological role, transcription factor that binds specifically to a 5'-AA[AG]G-3' consensus core sequence. Promotes expression. The PEAR proteins (e.g. DOF2.4, DOF5.1, DOF3.2, DOF1.1, DOF5.6 and DOF5.3) activate gene expression that promotes radial growth of protophloem sieve elements. Involved in the regulation of interfascicular cambium formation and vascular tissue development, particularly at a very early stage during inflorescence stem development; promotes both cambium activity and phloem specification, but prevents xylem specification. This Arabidopsis thaliana (Mouse-ear cress) protein is Dof zinc finger protein DOF5.6.